We begin with the raw amino-acid sequence, 344 residues long: S-adenosylmethionine:tRNA ribosyltransferase-isomerase (344 aa).

This sequence belongs to the QueA family. As to quaternary structure, monomer.

The protein resides in the cytoplasm. It carries out the reaction 7-aminomethyl-7-carbaguanosine(34) in tRNA + S-adenosyl-L-methionine = epoxyqueuosine(34) in tRNA + adenine + L-methionine + 2 H(+). It functions in the pathway tRNA modification; tRNA-queuosine biosynthesis. Transfers and isomerizes the ribose moiety from AdoMet to the 7-aminomethyl group of 7-deazaguanine (preQ1-tRNA) to give epoxyqueuosine (oQ-tRNA). The protein is S-adenosylmethionine:tRNA ribosyltransferase-isomerase of Pediococcus pentosaceus (strain ATCC 25745 / CCUG 21536 / LMG 10740 / 183-1w).